We begin with the raw amino-acid sequence, 593 residues long: DNA primase (593 aa).

The CHC2-type zinc finger occupies 38–62 (CPFHQEKTPSFTVSDSKRFFYCFGC). Residues 250–332 (NRSILVEGYF…EKKISFIRLP (83 aa)) form the Toprim domain. Mg(2+) is bound by residues E256, D300, and D302.

This sequence belongs to the DnaG primase family. In terms of assembly, monomer. Interacts with DnaB. The cofactor is Zn(2+). Mg(2+) is required as a cofactor.

The enzyme catalyses ssDNA + n NTP = ssDNA/pppN(pN)n-1 hybrid + (n-1) diphosphate.. In terms of biological role, RNA polymerase that catalyzes the synthesis of short RNA molecules used as primers for DNA polymerase during DNA replication. The sequence is that of DNA primase from Rickettsia prowazekii (strain Madrid E).